The following is a 206-amino-acid chain: Tektin bundle-interacting protein 1 (206 aa).

As to quaternary structure, microtubule inner protein component of sperm flagellar doublet microtubules.

The protein localises to the cytoplasm. It is found in the cytoskeleton. It localises to the cilium axoneme. The protein resides in the flagellum axoneme. Functionally, microtubule inner protein (MIP) part of the dynein-decorated doublet microtubules (DMTs) in cilia axoneme, which is required for motile cilia beating. Located at the center of the tektin bundle where may function to recruit tektins or stabilize the bundle. This chain is Tektin bundle-interacting protein 1, found in Mus musculus (Mouse).